Reading from the N-terminus, the 304-residue chain is MSPKHFLDLSAVTSADLRTIMNDALARKQAFKAGTGDKPLAGKMLAMIFEKPSTRTRVSFDVGMRQLGGETLFLSGTEMQLGRAETIGDTAKVLSRYVDAIMIRTTEHSRLLELAQHATVPVINALTDDTHPCQIMADIMTFEEHRGPIKGKTIAWTGDGNNVLHSLVEGAARFGYRMNMAVPLGSEPKDHYLNWARNEGAEIMLCHDADRAVAGVDCVVTDTWVSMNQEHRARGHNVFQPYQVNAALMAKAGNDALFMHCLPAHRGEEVTDDVIDGPQSVVFDEAENRLHAQKSILAWCLGAI.

Residues 53 to 56, glutamine 80, arginine 104, and 131 to 134 each bind carbamoyl phosphate; these read STRT and HPCQ. Residues asparagine 162, aspartate 222, and 226 to 227 each bind L-ornithine; that span reads SM. Carbamoyl phosphate contacts are provided by residues 261–262 and arginine 289; that span reads CL.

This sequence belongs to the aspartate/ornithine carbamoyltransferase superfamily. OTCase family.

It is found in the cytoplasm. The enzyme catalyses carbamoyl phosphate + L-ornithine = L-citrulline + phosphate + H(+). It participates in amino-acid biosynthesis; L-arginine biosynthesis; L-arginine from L-ornithine and carbamoyl phosphate: step 1/3. Reversibly catalyzes the transfer of the carbamoyl group from carbamoyl phosphate (CP) to the N(epsilon) atom of ornithine (ORN) to produce L-citrulline. This Rhizobium johnstonii (strain DSM 114642 / LMG 32736 / 3841) (Rhizobium leguminosarum bv. viciae) protein is Ornithine carbamoyltransferase.